A 319-amino-acid polypeptide reads, in one-letter code: G-protein coupled receptor 171 (319 aa).

At 1 to 21 (MTNSSFFCPVYKDLEPFTYFF) the chain is on the extracellular side. Asparagine 3 is a glycosylation site (N-linked (GlcNAc...) asparagine). The chain crosses the membrane as a helical span at residues 22–42 (YLVFLVGIIGSCFATWAFIQK). The Cytoplasmic segment spans residues 43-48 (NTNHRC). A helical transmembrane segment spans residues 49-69 (VSIYLINLLTADFLLTLALPV). Over 70–89 (KIVVDLGVAPWKLKIFHCQV) the chain is Extracellular. The chain crosses the membrane as a helical span at residues 90-110 (TACLIYINMYLSIIFLAFVSI). The Cytoplasmic segment spans residues 111-132 (DRCLQLTHSCKIYRIQEPGFAK). The helical transmembrane segment at 133–153 (MISTVVWLMVLLIMVPNMMIP) threads the bilayer. Residues 154-181 (IKDIKEKSNVGCMEFKKEFGRNWHLLTN) lie on the Extracellular side of the membrane. The chain crosses the membrane as a helical span at residues 182–202 (FICVAIFLNFSAIILISNCLV). At 203–224 (IRQLYRNKDNENYPNVKKALIN) the chain is on the cytoplasmic side. A helical transmembrane segment spans residues 225-245 (ILLVTTGYIICFVPYHIVRIP). The Extracellular portion of the chain corresponds to 246-268 (YTLSQTEVITDCSTRISLFKAKE). The chain crosses the membrane as a helical span at residues 269 to 289 (ATLLLAVSNLCFDPILYYHLS). Residues 290–319 (KAFRSKVTETFASPKETKAQKEKLRCENNA) are Cytoplasmic-facing.

It belongs to the G-protein coupled receptor 1 family. Expressed in both T-cell subsets and natural killer cells, while it is undetectable in B cells or CD14(+) monocytes. Expressed in peripheral blood mononuclear cells (PBMC) and Jurkat cells (at protein level).

It localises to the cell membrane. Its function is as follows. G-protein coupled receptor for Big LEN, a 16-amino acid neuropeptide produced from the precursor protein, proSAAS (encoded by PCSK1N). Acts through a G(i)-alpha-mediated pathway in response to Big LEN. Big LEN-GPR171 system plays an important role in regulating feeding and metabolism. Also plays a role in modulating fear and anxiety-like behaviors in the basolateral amygdala. Big LEN-GPR171 modulates the mu-type opioid receptor signaling and antinociception. Acts as a negative regulator T cell function. The polypeptide is G-protein coupled receptor 171 (Homo sapiens (Human)).